The following is a 255-amino-acid chain: Cullin-like protein 3 (255 aa).

The protein belongs to the cullin family.

In Arabidopsis thaliana (Mouse-ear cress), this protein is Cullin-like protein 3.